Consider the following 49-residue polypeptide: Large ribosomal subunit protein bL33 (49 aa).

It belongs to the bacterial ribosomal protein bL33 family.

This Streptococcus gordonii (strain Challis / ATCC 35105 / BCRC 15272 / CH1 / DL1 / V288) protein is Large ribosomal subunit protein bL33.